Reading from the N-terminus, the 329-residue chain is COP9 signalosome complex subunit 6 (329 aa).

In terms of domain architecture, MPN spans 44–175 (TRVKAQAACS…VTIYESELHV (132 aa)).

Belongs to the peptidase M67A family. CSN6 subfamily. In terms of assembly, component of the CSN complex, probably composed of CSN1, CSN2, CSN3, CSN4, CSN5, CSN6, CSN7 and CSN8.

Component of the COP9 signalosome complex (CSN), a complex involved in various cellular and developmental processes such as photomorphogenesis and response to hormones. The CSN complex is an essential regulator of the ubiquitin (Ubl) conjugation pathway by mediating the deneddylation of the cullin subunits of SCF-type E3 ligase complexes, leading to decrease the Ubl ligase activity of SCF. Involved in early response to iron deficiency. The sequence is that of COP9 signalosome complex subunit 6 from Oryza sativa subsp. japonica (Rice).